The primary structure comprises 309 residues: Protein FdhE (309 aa).

It belongs to the FdhE family.

It is found in the cytoplasm. Functionally, necessary for formate dehydrogenase activity. The sequence is that of Protein FdhE from Escherichia coli O127:H6 (strain E2348/69 / EPEC).